The following is a 128-amino-acid chain: DNA-directed RNA polymerase subunit omega (128 aa).

It belongs to the RNA polymerase subunit omega family. The RNAP catalytic core consists of 2 alpha, 1 beta, 1 beta' and 1 omega subunit. When a sigma factor is associated with the core the holoenzyme is formed, which can initiate transcription.

It carries out the reaction RNA(n) + a ribonucleoside 5'-triphosphate = RNA(n+1) + diphosphate. Promotes RNA polymerase assembly. Latches the N- and C-terminal regions of the beta' subunit thereby facilitating its interaction with the beta and alpha subunits. In Neorickettsia sennetsu (strain ATCC VR-367 / Miyayama) (Ehrlichia sennetsu), this protein is DNA-directed RNA polymerase subunit omega.